A 162-amino-acid chain; its full sequence is Putative colanic acid biosynthesis acetyltransferase WcaB (162 aa).

This sequence belongs to the transferase hexapeptide repeat family.

It participates in slime biogenesis; slime polysaccharide biosynthesis. This Escherichia coli O157:H7 protein is Putative colanic acid biosynthesis acetyltransferase WcaB (wcaB).